Consider the following 328-residue polypeptide: Malate dehydrogenase 2 (328 aa).

12 to 18 (GAAGQIA) contacts NAD(+). 2 residues coordinate substrate: Arg93 and Arg99. NAD(+)-binding positions include Asn106, Gln113, and 130–132 (VGN). Substrate-binding residues include Asn132 and Arg163. His188 (proton acceptor) is an active-site residue.

The protein belongs to the LDH/MDH superfamily. MDH type 2 family.

It catalyses the reaction (S)-malate + NAD(+) = oxaloacetate + NADH + H(+). Its function is as follows. Catalyzes the reversible oxidation of malate to oxaloacetate. This Burkholderia vietnamiensis (strain G4 / LMG 22486) (Burkholderia cepacia (strain R1808)) protein is Malate dehydrogenase 2.